Consider the following 202-residue polypeptide: Recombination protein RecR (202 aa).

The segment at 57 to 72 (CRDCRTFTEDDICAVC) adopts a C4-type zinc-finger fold. Residues 81 to 176 (GQICVVESPA…PATRIAHGVP (96 aa)) enclose the Toprim domain.

The protein belongs to the RecR family.

May play a role in DNA repair. It seems to be involved in an RecBC-independent recombinational process of DNA repair. It may act with RecF and RecO. This Photobacterium profundum (strain SS9) protein is Recombination protein RecR.